Consider the following 211-residue polypeptide: Uridine kinase (211 aa).

Residue 13 to 20 (GGSGSGKT) participates in ATP binding.

Belongs to the uridine kinase family.

It localises to the cytoplasm. It catalyses the reaction uridine + ATP = UMP + ADP + H(+). It carries out the reaction cytidine + ATP = CMP + ADP + H(+). The protein operates within pyrimidine metabolism; CTP biosynthesis via salvage pathway; CTP from cytidine: step 1/3. It participates in pyrimidine metabolism; UMP biosynthesis via salvage pathway; UMP from uridine: step 1/1. This Lactobacillus johnsonii (strain CNCM I-12250 / La1 / NCC 533) protein is Uridine kinase.